Reading from the N-terminus, the 210-residue chain is Cell division protein SepF (210 aa).

The disordered stretch occupies residues 13–101 (GLADGDEYDE…EPVDPGYRAP (89 aa)). Basic and acidic residues-rich tracts occupy residues 22–70 (EQPR…ERPE) and 83–93 (VEPRRPARPEP).

It belongs to the SepF family. As to quaternary structure, homodimer. Interacts with FtsZ.

It localises to the cytoplasm. Functionally, cell division protein that is part of the divisome complex and is recruited early to the Z-ring. Probably stimulates Z-ring formation, perhaps through the cross-linking of FtsZ protofilaments. Its function overlaps with FtsA. The sequence is that of Cell division protein SepF from Micrococcus luteus (strain ATCC 4698 / DSM 20030 / JCM 1464 / CCM 169 / CCUG 5858 / IAM 1056 / NBRC 3333 / NCIMB 9278 / NCTC 2665 / VKM Ac-2230) (Micrococcus lysodeikticus).